The following is a 146-amino-acid chain: Prefoldin subunit alpha 1 (146 aa).

It belongs to the prefoldin subunit alpha family. As to quaternary structure, heterohexamer of two alpha and four beta subunits.

The protein localises to the cytoplasm. Functionally, molecular chaperone capable of stabilizing a range of proteins. Seems to fulfill an ATP-independent, HSP70-like function in archaeal de novo protein folding. The protein is Prefoldin subunit alpha 1 of Thermococcus kodakarensis (strain ATCC BAA-918 / JCM 12380 / KOD1) (Pyrococcus kodakaraensis (strain KOD1)).